Reading from the N-terminus, the 21-residue chain is Protein YnfR (21 aa).

The polypeptide is Protein YnfR (Escherichia coli (strain K12)).